A 586-amino-acid chain; its full sequence is Axin-like protein pry-1 (586 aa).

The segment at 1 to 135 (METHLGWARS…FIEAFNKMSS (135 aa)) is required for interaction with apr-1. Positions 10-131 (SLEAVLSDRS…GSEEFIEAFN (122 aa)) constitute an RGS domain. Disordered stretches follow at residues 137–168 (TADQ…KSAA), 344–442 (MTDD…DSFA), and 478–501 (TSSL…HSKI). Polar residues-rich tracts occupy residues 151–168 (HQNT…KSAA) and 368–388 (GEGS…QLHN). The span at 421–442 (SQSMCAPSYSSASSSYSRDSFA) shows a compositional bias: low complexity. Positions 486-501 (RRQHRKAPTPKKHSKI) are enriched in basic residues. The DIX domain occupies 505 to 586 (LSNLITISYL…FEGRIAAELR (82 aa)).

As to quaternary structure, interacts (via N-terminus) with apr-1 (via C-terminus). Interacts with bar-1 (via ARM repeats), gsk-3, and mig-5. Expressed in hypodermal cells (seam cells) V5 and V6, Q neuroblasts, ventral hypodermal cells P7/8 to P11/12, body wall muscle cells and neurons in the head, the tail and the ventral nerve cord.

It localises to the cell membrane. Its subcellular location is the nucleus. The protein localises to the cytoplasm. It is found in the cell cortex. Works in parallel with axl-1 in negatively regulating bar-1 signaling in vulval precursor cells and Q neuroblasts. Inhibits Wnt signaling, which affects tissue specific expression of Hox genes, egl-5, lin-39 and mab-5. This in turn affects QR (postembryonic neuroblast) cell migration, vulval cell fate specification, and the development of sensory structures by the seam cell lineage. Has a role in alae V cell patterning, ray formation in the male tail and axon guidance. Does not affect B cell polarity. This Caenorhabditis elegans protein is Axin-like protein pry-1.